The following is a 292-amino-acid chain: MVVFSAASDSEKPGDAMSGADKGEEEYRKPAIPVANLNLAKSLRTLDAPEEFPEVIPLNVGGTYFTTRLSTLRRYEDTMLAAMFSGRHHIPRDAEGRYFIDRDGTYFGDILNFLREGELPQRDRVRAVHREAQYYAIGPLLENLEDTQPLTGEKVRQAFLDLLPYYKENLERIVEIAKLRAMQRKARFAKLKICVYKEEMPITPYERPLFNSLRFERSESEAKLFEHHCEVDVSFGPWEAVADVYDLLHCIVSDLAERGISADQQCIGVCDKHLINHYYCKRPIYEFKITWW.

The segment at 1–27 is disordered; the sequence is MVVFSAASDSEKPGDAMSGADKGEEEY. Positions 56–144 constitute a BTB domain; it reads IPLNVGGTYF…YAIGPLLENL (89 aa).

The protein resides in the cell membrane. It is found in the cytoplasm. Its subcellular location is the cytosol. The chain is BTB/POZ domain-containing protein KCTD7 (kctd7) from Danio rerio (Zebrafish).